Reading from the N-terminus, the 200-residue chain is MSQHELPSLPYDYDALEPHISEQVVTWHHDTHHQSYVDGLNSAEETLAENRETGDHASTAGALGDVTHNGCGHYLHTMFWEHMSPDGGGEPSGALADRIAADFGSYENWRAEFEVAAGAASGWALLVYDPVAKQLRNVAVDNHDEGALWGSHPILALDVWEHSYYYDYGPDRGSFVDAFFEVIDWDPIAANYDDVVSLFE.

Histidine 28, histidine 76, aspartate 158, and histidine 162 together coordinate Mn(2+).

This sequence belongs to the iron/manganese superoxide dismutase family. The cofactor is Mn(2+).

It catalyses the reaction 2 superoxide + 2 H(+) = H2O2 + O2. Destroys superoxide anion radicals which are normally produced within the cells and which are toxic to biological systems. This is Superoxide dismutase [Mn] 2 (sod2) from Halobacterium salinarum (strain ATCC 700922 / JCM 11081 / NRC-1) (Halobacterium halobium).